The primary structure comprises 250 residues: Probable syntaxin-8B (250 aa).

At 1–213 (MGDYWLNEHD…NRRMETIKQN (213 aa)) the chain is on the cytoplasmic side. A coiled-coil region spans residues 73 to 100 (EKELLRRKNKVESLISMKNQLNSTLDAA). One can recognise a t-SNARE coiled-coil homology domain in the interval 148–210 (QHIMREQDES…RNANRRMETI (63 aa)). The chain crosses the membrane as a helical; Anchor for type IV membrane protein span at residues 214–234 (AGSTCMIVCIVILIILIVVLI). The Vesicular segment spans residues 235–250 (ATDSGCKIYNDPKHCP).

This sequence belongs to the syntaxin family.

The protein localises to the membrane. This is Probable syntaxin-8B (syn8B) from Dictyostelium discoideum (Social amoeba).